The sequence spans 672 residues: uncharacterized protein (672 aa).

Basic and acidic residues predominate over residues 1 to 10 (MAKSDGDDPL). Residues 1 to 40 (MAKSDGDDPLRPASPRLRSSRRHSLRYSAYTGGPDPLAPP) form a disordered region.

This is an uncharacterized protein from Mycobacterium tuberculosis (strain CDC 1551 / Oshkosh).